Here is a 515-residue protein sequence, read N- to C-terminus: Bifunctional purine biosynthesis protein PurH (515 aa).

Residues Met-1–Val-145 enclose the MGS-like domain.

This sequence belongs to the PurH family.

It catalyses the reaction (6R)-10-formyltetrahydrofolate + 5-amino-1-(5-phospho-beta-D-ribosyl)imidazole-4-carboxamide = 5-formamido-1-(5-phospho-D-ribosyl)imidazole-4-carboxamide + (6S)-5,6,7,8-tetrahydrofolate. The enzyme catalyses IMP + H2O = 5-formamido-1-(5-phospho-D-ribosyl)imidazole-4-carboxamide. It participates in purine metabolism; IMP biosynthesis via de novo pathway; 5-formamido-1-(5-phospho-D-ribosyl)imidazole-4-carboxamide from 5-amino-1-(5-phospho-D-ribosyl)imidazole-4-carboxamide (10-formyl THF route): step 1/1. It functions in the pathway purine metabolism; IMP biosynthesis via de novo pathway; IMP from 5-formamido-1-(5-phospho-D-ribosyl)imidazole-4-carboxamide: step 1/1. The polypeptide is Bifunctional purine biosynthesis protein PurH (Streptococcus pneumoniae (strain 70585)).